The following is a 154-amino-acid chain: Small ribosomal subunit protein uS19 (154 aa).

This sequence belongs to the universal ribosomal protein uS19 family.

This Oryza sativa subsp. japonica (Rice) protein is Small ribosomal subunit protein uS19 (RPS15).